A 1366-amino-acid chain; its full sequence is MTNTGILAPSSQQSEPEWWTKTQKFFSRENTITPTFGYFRLLFGTQPGKTDIALIVIGTIAGIGAGIPFPLLGILFGELVDDLNSSTCSTTQAPPGGYQAAITTKVLQVIYASILNFVCMYIHTGCWSMVGERLVRRLRTKYFHSLLRQEIAFTDTLPSGDVTSRLVSDIEVIQAGTSEKVGLFIGTISYFVAAYIVAFLKVATIAAMLMSVVPIYFLMAFGGGHYIKKYSSRISTHINAATSIVSSSLSHMSIVHAFNANARLEALFAQHLVSARMDALKKAITHSIQFGMLYFVAYASNALAFWQGSRMIADLAEGKPSKVSVGAVYTVIFVLLDASFVLSQMAPFMHIFASAASAGDRLMTTIKRQSAIDGTSSEGDSTISLASEEIELQDVTFNYPARPEVPVLQGVSFKIPPNKHTAIVGTSGSGKSTVVALLERLYDPITGCVRVGNRDLKEINVRHLRGSIGLVQQEPNLLDRSILENIAHGLVSSSQEKHKHLLPILLGPSLSELTEKIRQGASEDEAVAEQGDVVREIVNLARHAATLSNAIDFINALPDGLATRVGSSGAELSGGQKQRIALARALIRDPPVLLLDEATAALDSTSERLIQAALTKVSENVTTVSIAHRLATAKDADNIIVMQKGKVMEQGTHMDLVARDGVYAGMVRLQNIGKFSSSSSIMTESTQVDVNIDRSLTTDTLLNKEEKLSLEQGVLDEKEKPAQLYMPEEADSLPTEPEAKKEKPKQTLWATMRGSFPLIRPNLLLISLGLITSIMIGVSYTGEAVIFGHTVGSLSVCRGGPSIRSSGMLFGLLFFILAVAKFAAVIVNGAAFGWAAEKTLYRTRVLSLRSLLRQPLEWHNADGRTPGLLVALVTSDASALSSLTGTTIGVLFSTVANLFAGVILSHVIAWKIAVVLLATLPVLLASGVLRLRVMAQYQKKHQKAYAKATAITVETVDNIKSIAAFSLEQEAYSVFNRSLKAPYKSNMKSVLHGNFWLSLAYSISTLVYALAYWWGSQQILAGMYTQVQFFIVLPALLFSTQSCGQMFALVPDISKARIAASNIVDLLSIKHEGDEEYDKTGSKASAKHTDPRFNMLEDKPRDVEAQLTTTTPSSFPTKGMGVQFRNVHFRYPSRPNQPALDDLSINISPGQFCALVGPSGSGKSTTFALLEKFYNPASGSIIIDGVDITKQSGAAFRDTIALVPQENVMFEGTVAFNIGLGARPDVEATQEEIEEACRLANIHDTIAALPDGYNTVCSQDGKQFSGGQRQRLSIARALVRKPRLLLLDESTSALDVESEKHVQDALAKVARKTTIVAIAHRLNTIHRADRIFMIEGGKCVDQGTHAELVERCESYRANVIHQSLDA.

A helical transmembrane segment spans residues 52-72 (IALIVIGTIAGIGAGIPFPLL). Residues 56 to 354 (VIGTIAGIGA…MAPFMHIFAS (299 aa)) form the ABC transmembrane type-1 1 domain. Residue N84 is glycosylated (N-linked (GlcNAc...) asparagine). 5 consecutive transmembrane segments (helical) span residues 106 to 126 (VLQVIYASILNFVCMYIHTGC), 180 to 200 (KVGLFIGTISYFVAAYIVAFL), 202 to 222 (VATIAAMLMSVVPIYFLMAFG), 288 to 308 (IQFGMLYFVAYASNALAFWQG), and 323 to 343 (VSVGAVYTVIFVLLDASFVLS). The ABC transporter 1 domain occupies 390-669 (IELQDVTFNY…DGVYAGMVRL (280 aa)). Position 425 to 432 (425 to 432 (GTSGSGKS)) interacts with ATP. N-linked (GlcNAc...) asparagine glycosylation occurs at N620. The interval 727 to 746 (PEEADSLPTEPEAKKEKPKQ) is disordered. 4 helical membrane passes run 768-788 (LGLITSIMIGVSYTGEAVIFG), 807-827 (GMLFGLLFFILAVAKFAAVIV), 868-888 (LLVALVTSDASALSSLTGTTI), and 898-918 (LFAGVILSHVIAWKIAVVLLA). Residues 768–1055 (LGLITSIMIG…MFALVPDISK (288 aa)) enclose the ABC transmembrane type-1 2 domain. N976 is a glycosylation site (N-linked (GlcNAc...) asparagine). A run of 2 helical transmembrane segments spans residues 995–1015 (FWLSLAYSISTLVYALAYWWG) and 1019–1039 (ILAGMYTQVQFFIVLPALLFS). The 240-residue stretch at 1122-1361 (VQFRNVHFRY…CESYRANVIH (240 aa)) folds into the ABC transporter 2 domain. Residue 1157–1164 (GPSGSGKS) participates in ATP binding.

This sequence belongs to the ABC transporter superfamily. ABCB family. Multidrug resistance exporter (TC 3.A.1.201) subfamily.

Its subcellular location is the cell membrane. Pleiotropic ABC efflux transporter that may be involved in the modulation susceptibility to a wide range of unrelated cytotoxic compounds. Does not act as an efflux pump for azoles, including fluconazole, itraconazole, ketoconazole, miconazole and voriconazole, nor does it modulate susceptibility to cycloheximide. The sequence is that of ABC multidrug transporter MDR2 from Trichophyton rubrum (strain ATCC MYA-4607 / CBS 118892) (Athlete's foot fungus).